A 696-amino-acid polypeptide reads, in one-letter code: Putative cyclic nucleotide-gated ion channel 13 (696 aa).

Topologically, residues 1 to 81 are cytoplasmic; the sequence is MAFGRNNRVR…QGSFLQNWNK (81 aa). The interval 45–65 is disordered; the sequence is KPLSFGSHNKKRDSNSSTTTQ. A helical membrane pass occupies residues 82 to 102; it reads IFLFASVIALAIDPLFFYIPI. Residues 103–116 lie on the Extracellular side of the membrane; it reads VDGERHCLNLHRNL. The helical transmembrane segment at 117–137 threads the bilayer; sequence EIAASVLRTFIDAFYIIHIVF. Residues 138–170 are Cytoplasmic-facing; the sequence is QFRTAYISPSSRVFGRGELVDDPKAIAIKYLSS. Residues 171–191 traverse the membrane as a helical segment; that stretch reads YFIIDLLSILPLPQLVVLAVI. Residues 192–204 lie on the Extracellular side of the membrane; the sequence is PNVNKPVSLITKD. Residues 205–225 form a helical membrane-spanning segment; sequence YLITVIFTQYIPRILRIYPLY. Residues 226–243 lie on the Cytoplasmic side of the membrane; sequence TEVTRTSGIVTETAWAGA. The chain crosses the membrane as a helical span at residues 244-264; sequence AWNLSLYMLASHVFGALWYLI. The Extracellular portion of the chain corresponds to 265 to 367; it reads SVEREDRCWR…GQNLNTSKFV (103 aa). Residues 368 to 388 form a helical membrane-spanning segment; that stretch reads GEIIFAVSICISGLVLFALLI. Residues 389–696 lie on the Cytoplasmic side of the membrane; that stretch reads GNMQKYLEST…SEPDFSLRNP (308 aa). A nucleoside 3',5'-cyclic phosphate-binding positions include 474-598 and E545; that span reads LFEI…SKQL. Residues 590–605 form a calmodulin-binding region; it reads FRRLHSKQLQHTFRFY. Residues 610-639 form the IQ domain; sequence RTWGASFIQAAWRRHCRRKLARSLTEEEDR. The segment at 677-696 is disordered; sequence NNLPLLPPKPSEPDFSLRNP.

This sequence belongs to the cyclic nucleotide-gated cation channel (TC 1.A.1.5) family. Homotetramer or heterotetramer.

It is found in the cell membrane. Its function is as follows. Putative cyclic nucleotide-gated ion channel. This chain is Putative cyclic nucleotide-gated ion channel 13 (CNGC13), found in Arabidopsis thaliana (Mouse-ear cress).